The chain runs to 122 residues: Large ribosomal subunit protein uL14 (122 aa).

This sequence belongs to the universal ribosomal protein uL14 family. As to quaternary structure, part of the 50S ribosomal subunit. Forms a cluster with proteins L3 and L19. In the 70S ribosome, L14 and L19 interact and together make contacts with the 16S rRNA in bridges B5 and B8.

In terms of biological role, binds to 23S rRNA. Forms part of two intersubunit bridges in the 70S ribosome. The sequence is that of Large ribosomal subunit protein uL14 from Burkholderia multivorans (strain ATCC 17616 / 249).